The primary structure comprises 493 residues: Zinc finger CCCH domain-containing protein 34 (493 aa).

3 C3H1-type zinc fingers span residues 14–43 (RRCN…HADG), 45–71 (RFNR…HPPL), and 91–118 (VKAA…HEPL). A disordered region spans residues 397–477 (MGECPQPANH…SFSDDFEGPK (81 aa)). Positions 409–420 (FRGRRKKNRGKQ) are enriched in basic residues. The span at 452-468 (SNSSFSHSTACTPNVRS) shows a compositional bias: polar residues.

The chain is Zinc finger CCCH domain-containing protein 34 from Oryza sativa subsp. japonica (Rice).